A 529-amino-acid polypeptide reads, in one-letter code: uncharacterized protein (529 aa).

A helical transmembrane segment spans residues 354-373; sequence FHVASFPWISWAILGSYIML.

The protein localises to the host membrane. This is an uncharacterized protein from Acidianus convivator (ATV).